The primary structure comprises 201 residues: LexA repressor 1 (201 aa).

A DNA-binding region (H-T-H motif) is located at residues 28–48; it reads LREIAAHLKISGTLGVSKHLE. Active-site for autocatalytic cleavage activity residues include Ser-120 and Lys-157.

The protein belongs to the peptidase S24 family. As to quaternary structure, homodimer.

It catalyses the reaction Hydrolysis of Ala-|-Gly bond in repressor LexA.. Represses a number of genes involved in the response to DNA damage (SOS response), including recA and lexA. In the presence of single-stranded DNA, RecA interacts with LexA causing an autocatalytic cleavage which disrupts the DNA-binding part of LexA, leading to derepression of the SOS regulon and eventually DNA repair. The chain is LexA repressor 1 from Geobacter sulfurreducens (strain ATCC 51573 / DSM 12127 / PCA).